The following is a 185-amino-acid chain: PXMP2/4 family protein 4 (185 aa).

Helical transmembrane passes span 63-83, 100-120, and 141-161; these read MAVF…KYLD, IDQV…MGIL, and VSDC…ISSI.

It belongs to the peroxisomal membrane protein PXMP2/4 family.

Its subcellular location is the membrane. The chain is PXMP2/4 family protein 4 from Dictyostelium discoideum (Social amoeba).